A 634-amino-acid chain; its full sequence is CREB-regulated transcription coactivator 1 (634 aa).

Residues Ser-64 and Ser-113 each carry the phosphoserine modification. 4 disordered regions span residues 110-174, 191-221, 258-331, and 357-479; these read RLGS…GSQD, TTSEADKNLSKQAWDTKKTGSRPKSCEVPGI, LPTP…TLSP, and QAGS…HTST. Thr-149 bears the Phosphothreonine mark. The residue at position 151 (Ser-151) is a Phosphoserine; by SIK1 and SIK2. The segment covering 151 to 174 has biased composition (polar residues); that stretch reads SDSALHQSTMTPTQPESFSSGSQD. Position 161 is a phosphothreonine (Thr-161). Residues 194 to 208 are compositionally biased toward basic and acidic residues; it reads EADKNLSKQAWDTKK. The short motif at 242 to 258 is the Nuclear export signal element; that stretch reads TGGSLPDLTNIHFPSPL. Composition is skewed to polar residues over residues 271–283, 296–305, and 314–331; these read ALSSSSSTGNLAA, GMSTPGSSPQ, and LSLSTEARRQQASPTLSP. Residues 362 to 397 show a composition bias toward pro residues; the sequence is QPPPQPQPPPPPPPASQQPPPPPPPQAPVRLPPGGP. The span at 446-479 shows a compositional bias: polar residues; that stretch reads QYRTSAGSPANQSPTSPVSNQGFSPGSSPQHTST.

The protein belongs to the TORC family. As to quaternary structure, binds, as a tetramer, through its N-terminal region, with the bZIP domain of CREB1. 'Arg-314' in the bZIP domain of CREB1 is essential for this interaction. Interaction, via its C-terminal, with TAF4, enhances recruitment of TAF4 to CREB1. Interacts with 14-3-3 proteins, including YWHAE/14-3-3 epsilon. Interacts with calmodulin-dependent catalytic subunit PPP3CA/calcineurin A. (Microbial infection) Interacts with HTLV1 Tax. In terms of processing, phosphorylation/dephosphorylation states of Ser-151 are required for regulating transduction of CREB activity. TORCs are inactive when phosphorylated, and active when dephosphorylated at this site. This primary site of phosphorylation is mediated by SIKs (SIK1 and SIK2), is regulated by cAMP and calcium levels and is dependent on the phosphorylation of SIKs by LKB1. In terms of tissue distribution, highly expressed in adult and fetal brain. Located to specific regions such as the prefrontal cortex and cerebellum. Very low expression in other tissues such as heart, spleen, lung, skeletal muscle, salivary gland, ovary and kidney.

The protein localises to the cytoplasm. It localises to the nucleus. Functionally, transcriptional coactivator for CREB1 which activates transcription through both consensus and variant cAMP response element (CRE) sites. Acts as a coactivator, in the SIK/TORC signaling pathway, being active when dephosphorylated and acts independently of CREB1 'Ser-133' phosphorylation. Enhances the interaction of CREB1 with TAF4. Regulates the expression of specific CREB-activated genes such as the steroidogenic gene, StAR. Potent coactivator of PGC1alpha and inducer of mitochondrial biogenesis in muscle cells. In the hippocampus, involved in late-phase long-term potentiation (L-LTP) maintenance at the Schaffer collateral-CA1 synapses. May be required for dendritic growth of developing cortical neurons. In concert with SIK1, regulates the light-induced entrainment of the circadian clock. In response to light stimulus, coactivates the CREB-mediated transcription of PER1 which plays an important role in the photic entrainment of the circadian clock. In terms of biological role, (Microbial infection) Plays a role of coactivator for TAX activation of the human T-cell leukemia virus type 1 (HTLV-1) long terminal repeats (LTR). The protein is CREB-regulated transcription coactivator 1 of Homo sapiens (Human).